A 374-amino-acid chain; its full sequence is WAT1-related protein At2g39510 (374 aa).

A run of 10 helical transmembrane segments spans residues 9 to 29, 38 to 58, 64 to 84, 99 to 119, 135 to 155, 182 to 202, 212 to 232, 249 to 269, 284 to 304, and 306 to 326; these read FITV…AKFA, VLAS…AYFL, PKMT…EPTI, TFTA…AWIF, ILGT…KGPL, GASL…LQAI, SLTA…ALFI, LAAV…QGVI, LSMV…MFLG, and ILGA…KSKD. EamA domains lie at 19–147 and 191–320; these read YAGL…GAML and ICWA…YSVL. The interval 350–374 is disordered; that stretch reads SKANAKMDTNDASVVISRPNTNESV.

The protein belongs to the drug/metabolite transporter (DMT) superfamily. Plant drug/metabolite exporter (P-DME) (TC 2.A.7.4) family.

It localises to the membrane. The protein is WAT1-related protein At2g39510 of Arabidopsis thaliana (Mouse-ear cress).